Consider the following 371-residue polypeptide: Putative RNA-binding protein Luc7-like 1 (371 aa).

2 coiled-coil regions span residues 87-177 (MDHL…RNSM) and 220-256 (QIREKLDQLRKTVAEKQEKRNQDRLRRREEREREERL). Basic and acidic residues predominate over residues 232–257 (VAEKQEKRNQDRLRRREEREREERLG). Positions 232–371 (VAEKQEKRNQ…RSEEKEAGEI (140 aa)) are disordered. A compositionally biased stretch (basic residues) spans 258–317 (RRSGSRTRDRRRSRSRDRRRRRSRSTSRERRKFSRSRSRDRYRRHRSRSRSHSRGHRRAS). Composition is skewed to basic and acidic residues over residues 318–351 (RDRSTKYKFSRERSLREESWEYGRNERGPTDWRL) and 361–371 (RRSEEKEAGEI). Phosphoserine is present on residues S336 and S363.

The protein belongs to the Luc7 family.

Its function is as follows. May bind to RNA via its Arg/Ser-rich domain. The protein is Putative RNA-binding protein Luc7-like 1 (Luc7l) of Mus musculus (Mouse).